A 242-amino-acid polypeptide reads, in one-letter code: Adenylate kinase 1 (242 aa).

ATP contacts are provided by residues glycine 38–threonine 43 and glycine 42. Residues serine 58 to valine 87 are NMP. AMP contacts are provided by residues threonine 59, arginine 64, lysine 85–valine 87, glycine 113, glycine 113–arginine 116, and glutamine 120. The segment at glycine 154–aspartate 191 is LID. ATP contacts are provided by arginine 155 and tyrosine 165. Arginine 199 is an AMP binding site. Alanine 229 contributes to the ATP binding site.

It belongs to the adenylate kinase family.

The protein localises to the cytoplasm. It carries out the reaction AMP + ATP = 2 ADP. Inhibited by the dinucleoside pentaphosphate compound P1,P5-di(adenosine-5') pentaphosphate (AP5A). Its function is as follows. Catalyzes the reversible transfer of the terminal phosphate group between ATP and AMP. Has very low activity with CTP, GTP, ITP and UTP and no activity with GMP, CMP, UMP or IMP in vitro. This Plasmodium falciparum (isolate 3D7) protein is Adenylate kinase 1.